A 339-amino-acid polypeptide reads, in one-letter code: Transcription initiation factor IIB (339 aa).

The segment at glutamate 39–glutamine 70 adopts a TFIIB-type zinc-finger fold. The Zn(2+) site is built by cysteine 43, cysteine 46, cysteine 62, and cysteine 65. 2 tandem repeats follow at residues serine 156 to leucine 239 and aspartate 250 to glutamate 331.

The protein belongs to the TFIIB family.

Functionally, stabilizes TBP binding to an archaeal box-A promoter. Also responsible for recruiting RNA polymerase II to the pre-initiation complex (DNA-TBP-TFIIB). This is Transcription initiation factor IIB from Methanothermococcus thermolithotrophicus (Methanococcus thermolithotrophicus).